We begin with the raw amino-acid sequence, 328 residues long: Phosphate acetyltransferase (328 aa).

The protein belongs to the phosphate acetyltransferase and butyryltransferase family.

The protein resides in the cytoplasm. It carries out the reaction acetyl-CoA + phosphate = acetyl phosphate + CoA. It participates in metabolic intermediate biosynthesis; acetyl-CoA biosynthesis; acetyl-CoA from acetate: step 2/2. This Thermoanaerobacterium thermosaccharolyticum (strain ATCC 7956 / DSM 571 / NCIMB 9385 / NCA 3814 / NCTC 13789 / WDCM 00135 / 2032) (Clostridium thermosaccharolyticum) protein is Phosphate acetyltransferase (pta).